The primary structure comprises 348 residues: Mannonate dehydratase (348 aa).

This sequence belongs to the mannonate dehydratase family. Fe(2+) is required as a cofactor. The cofactor is Mn(2+).

It catalyses the reaction D-mannonate = 2-dehydro-3-deoxy-D-gluconate + H2O. It participates in carbohydrate metabolism; pentose and glucuronate interconversion. Functionally, catalyzes the dehydration of D-mannonate. This is Mannonate dehydratase from Streptococcus agalactiae serotype Ia (strain ATCC 27591 / A909 / CDC SS700).